Here is a 446-residue protein sequence, read N- to C-terminus: tRNA-2-methylthio-N(6)-dimethylallyladenosine synthase (446 aa).

In terms of domain architecture, MTTase N-terminal spans 3–120; sequence KKLFIETHGC…LPEMIDAARS (118 aa). Residues C12, C49, C83, C157, C161, and C164 each contribute to the [4Fe-4S] cluster site. Residues 143–375 enclose the Radical SAM core domain; the sequence is RVDGPTAFVS…QGRIHQQGYE (233 aa). One can recognise a TRAM domain in the interval 378-442; sequence RRMVGSTQRI…PHSLRGTLIE (65 aa).

The protein belongs to the methylthiotransferase family. MiaB subfamily. In terms of assembly, monomer. [4Fe-4S] cluster is required as a cofactor.

Its subcellular location is the cytoplasm. It catalyses the reaction N(6)-dimethylallyladenosine(37) in tRNA + (sulfur carrier)-SH + AH2 + 2 S-adenosyl-L-methionine = 2-methylsulfanyl-N(6)-dimethylallyladenosine(37) in tRNA + (sulfur carrier)-H + 5'-deoxyadenosine + L-methionine + A + S-adenosyl-L-homocysteine + 2 H(+). Its function is as follows. Catalyzes the methylthiolation of N6-(dimethylallyl)adenosine (i(6)A), leading to the formation of 2-methylthio-N6-(dimethylallyl)adenosine (ms(2)i(6)A) at position 37 in tRNAs that read codons beginning with uridine. The protein is tRNA-2-methylthio-N(6)-dimethylallyladenosine synthase of Pseudomonas paraeruginosa (strain DSM 24068 / PA7) (Pseudomonas aeruginosa (strain PA7)).